Here is a 300-residue protein sequence, read N- to C-terminus: GTPase Era (300 aa).

One can recognise an Era-type G domain in the interval 8–176 (RCGYVAIVGR…EKVIADHLPE (169 aa)). Residues 16 to 23 (GRPNVGKS) form a G1 region. 16–23 (GRPNVGKS) contacts GTP. The segment at 42 to 46 (QTTRH) is G2. The interval 63–66 (DTPG) is G3. GTP-binding positions include 63–67 (DTPGM) and 125–128 (NKTD). The segment at 125–128 (NKTD) is G4. A G5 region spans residues 155–157 (ISA). Residues 199–283 (VREKIMRQLG…MLNLWVKVKG (85 aa)) form the KH type-2 domain.

The protein belongs to the TRAFAC class TrmE-Era-EngA-EngB-Septin-like GTPase superfamily. Era GTPase family. As to quaternary structure, monomer.

Its subcellular location is the cytoplasm. The protein resides in the cell inner membrane. Its function is as follows. An essential GTPase that binds both GDP and GTP, with rapid nucleotide exchange. Plays a role in 16S rRNA processing and 30S ribosomal subunit biogenesis and possibly also in cell cycle regulation and energy metabolism. This Pseudomonas fluorescens (strain Pf0-1) protein is GTPase Era.